The chain runs to 634 residues: 1-deoxy-D-xylulose-5-phosphate synthase (634 aa).

Thiamine diphosphate is bound by residues H74 and 115-117 (AHS). Position 146 (D146) interacts with Mg(2+). Thiamine diphosphate-binding positions include 147 to 148 (GA), N176, Y283, and E365. N176 lines the Mg(2+) pocket.

The protein belongs to the transketolase family. DXPS subfamily. Homodimer. It depends on Mg(2+) as a cofactor. Thiamine diphosphate serves as cofactor.

It catalyses the reaction D-glyceraldehyde 3-phosphate + pyruvate + H(+) = 1-deoxy-D-xylulose 5-phosphate + CO2. The protein operates within metabolic intermediate biosynthesis; 1-deoxy-D-xylulose 5-phosphate biosynthesis; 1-deoxy-D-xylulose 5-phosphate from D-glyceraldehyde 3-phosphate and pyruvate: step 1/1. In terms of biological role, catalyzes the acyloin condensation reaction between C atoms 2 and 3 of pyruvate and glyceraldehyde 3-phosphate to yield 1-deoxy-D-xylulose-5-phosphate (DXP). The protein is 1-deoxy-D-xylulose-5-phosphate synthase of Burkholderia lata (strain ATCC 17760 / DSM 23089 / LMG 22485 / NCIMB 9086 / R18194 / 383).